We begin with the raw amino-acid sequence, 411 residues long: Dual-specificity RNA methyltransferase RlmN (411 aa).

Glutamate 125 functions as the Proton acceptor in the catalytic mechanism. In terms of domain architecture, Radical SAM core spans 131–380 (EEGRGTLCIS…IRTPRGRDIL (250 aa)). An intrachain disulfide couples cysteine 138 to cysteine 383. [4Fe-4S] cluster contacts are provided by cysteine 145, cysteine 149, and cysteine 152. Residues 209 to 210 (GE), serine 241, 263 to 265 (SLH), and asparagine 340 contribute to the S-adenosyl-L-methionine site. The active-site S-methylcysteine intermediate is cysteine 383.

This sequence belongs to the radical SAM superfamily. RlmN family. [4Fe-4S] cluster is required as a cofactor.

It is found in the cytoplasm. The enzyme catalyses adenosine(2503) in 23S rRNA + 2 reduced [2Fe-2S]-[ferredoxin] + 2 S-adenosyl-L-methionine = 2-methyladenosine(2503) in 23S rRNA + 5'-deoxyadenosine + L-methionine + 2 oxidized [2Fe-2S]-[ferredoxin] + S-adenosyl-L-homocysteine. The catalysed reaction is adenosine(37) in tRNA + 2 reduced [2Fe-2S]-[ferredoxin] + 2 S-adenosyl-L-methionine = 2-methyladenosine(37) in tRNA + 5'-deoxyadenosine + L-methionine + 2 oxidized [2Fe-2S]-[ferredoxin] + S-adenosyl-L-homocysteine. Its function is as follows. Specifically methylates position 2 of adenine 2503 in 23S rRNA and position 2 of adenine 37 in tRNAs. m2A2503 modification seems to play a crucial role in the proofreading step occurring at the peptidyl transferase center and thus would serve to optimize ribosomal fidelity. The polypeptide is Dual-specificity RNA methyltransferase RlmN (Brucella abortus (strain S19)).